We begin with the raw amino-acid sequence, 438 residues long: Glutamate-1-semialdehyde 2,1-aminomutase (438 aa).

Lys278 bears the N6-(pyridoxal phosphate)lysine mark.

This sequence belongs to the class-III pyridoxal-phosphate-dependent aminotransferase family. HemL subfamily. In terms of assembly, homodimer. The cofactor is pyridoxal 5'-phosphate.

The protein resides in the cytoplasm. The catalysed reaction is (S)-4-amino-5-oxopentanoate = 5-aminolevulinate. The protein operates within porphyrin-containing compound metabolism; protoporphyrin-IX biosynthesis; 5-aminolevulinate from L-glutamyl-tRNA(Glu): step 2/2. In Delftia acidovorans (strain DSM 14801 / SPH-1), this protein is Glutamate-1-semialdehyde 2,1-aminomutase.